The primary structure comprises 328 residues: Alanine racemase (328 aa).

Residue Lys-33 is the Proton acceptor; specific for D-alanine of the active site. Lys-33 bears the N6-(pyridoxal phosphate)lysine mark. Arg-118 lines the substrate pocket. The active-site Proton acceptor; specific for L-alanine is the Tyr-237. Met-283 is a binding site for substrate.

It belongs to the alanine racemase family. It depends on pyridoxal 5'-phosphate as a cofactor.

It carries out the reaction L-alanine = D-alanine. Its pathway is amino-acid biosynthesis; D-alanine biosynthesis; D-alanine from L-alanine: step 1/1. Functionally, catalyzes the interconversion of L-alanine and D-alanine. May also act on other amino acids. In Campylobacter jejuni subsp. jejuni serotype O:6 (strain 81116 / NCTC 11828), this protein is Alanine racemase (alr).